Reading from the N-terminus, the 216-residue chain is Nucleoid occlusion factor SlmA (216 aa).

Residues 1–23 form a disordered region; sequence MAEQLTLDSIEPEPEKQSAKIEK. Positions 13–23 are enriched in basic and acidic residues; that stretch reads EPEKQSAKIEK. Residues 28–88 form the HTH tetR-type domain; it reads ERRQQVLTVL…ALIENIESSL (61 aa). A DNA-binding region (H-T-H motif) is located at residues 51–70; that stretch reads TTARLAKEVGVSEAALYRYF.

Belongs to the nucleoid occlusion factor SlmA family. In terms of assembly, homodimer. Interacts with FtsZ.

It is found in the cytoplasm. Its subcellular location is the nucleoid. Its function is as follows. Required for nucleoid occlusion (NO) phenomenon, which prevents Z-ring formation and cell division over the nucleoid. Acts as a DNA-associated cell division inhibitor that binds simultaneously chromosomal DNA and FtsZ, and disrupts the assembly of FtsZ polymers. SlmA-DNA-binding sequences (SBS) are dispersed on non-Ter regions of the chromosome, preventing FtsZ polymerization at these regions. The chain is Nucleoid occlusion factor SlmA from Mannheimia succiniciproducens (strain KCTC 0769BP / MBEL55E).